Consider the following 883-residue polypeptide: Valine--tRNA ligase (883 aa).

The 'HIGH' region signature appears at 46–56; that stretch reads PNVTGKLHLGH. The short motif at 520 to 524 is the 'KMSKS' region element; that stretch reads KMSKS. An ATP-binding site is contributed by Lys-523. Residues 809 to 883 are a coiled coil; the sequence is LADLLNVEEE…RIDEMKKLVK (75 aa).

Belongs to the class-I aminoacyl-tRNA synthetase family. ValS type 1 subfamily. In terms of assembly, monomer.

It is found in the cytoplasm. The catalysed reaction is tRNA(Val) + L-valine + ATP = L-valyl-tRNA(Val) + AMP + diphosphate. Its function is as follows. Catalyzes the attachment of valine to tRNA(Val). As ValRS can inadvertently accommodate and process structurally similar amino acids such as threonine, to avoid such errors, it has a 'posttransfer' editing activity that hydrolyzes mischarged Thr-tRNA(Val) in a tRNA-dependent manner. This is Valine--tRNA ligase from Streptococcus pneumoniae serotype 4 (strain ATCC BAA-334 / TIGR4).